Here is a 317-residue protein sequence, read N- to C-terminus: Vacuolar arginine/histidine antiporter YPQ2 (317 aa).

Over 1 to 13 the chain is Vacuolar; that stretch reads MSCSNGIWPTVSN. One can recognise a PQ-loop 1 domain in the interval 8–71; the sequence is WPTVSNLCGS…AKLTGQLLFQ (64 aa). Residues 14 to 34 form a helical membrane-spanning segment; that stretch reads LCGSLSFFTSVISLFPQIIET. At 35 to 39 the chain is on the cytoplasmic side; sequence YRDKS. The chain crosses the membrane as a helical span at residues 40 to 62; the sequence is VDGLSPYFLLAWLCGDITSLIGA. Residues 63–71 lie on the Vacuolar side of the membrane; that stretch reads KLTGQLLFQ. Residues 72–94 form a helical membrane-spanning segment; that stretch reads ILLAIYFLLNDSFVCGQYYYYGV. At 95 to 143 the chain is on the cytoplasmic side; that stretch reads LHENKLATVGHEPKPLLPELVENGELLREEEDMIQGGSSAESPRSSRRR. Serine 136 carries the phosphoserine modification. A helical membrane pass occupies residues 144–164; the sequence is SAITAALAIAHTISTASAYPL. The Vacuolar portion of the chain corresponds to 165–184; sequence NVGSTQSQVGPPGDGKNSQL. The chain crosses the membrane as a helical span at residues 185 to 205; that stretch reads GTILSWIGASFYVGARIPQLI. The PQ-loop 2 domain maps to 185-247; that stretch reads GTILSWIGAS…SCRFLDNQNK (63 aa). Residues 206 to 215 lie on the Cytoplasmic side of the membrane; the sequence is KNYNRKSTDG. Residues 216–236 form a helical membrane-spanning segment; it reads LSPFLFATTLLCNITYNLSIF. The Vacuolar portion of the chain corresponds to 237-249; the sequence is TSCRFLDNQNKRE. A helical membrane pass occupies residues 250–270; that stretch reads FIVNELPFIFGSAGTIAFDLI. Topologically, residues 271–317 are cytoplasmic; sequence YFYQYYILYATDMQLRELERELYSPEEDSAAQLVTERTSLLSGETQT.

The protein belongs to the laat-1 family.

The protein localises to the vacuole membrane. The enzyme catalyses L-histidine(out) + L-arginine(in) = L-histidine(in) + L-arginine(out). In terms of biological role, amino acid transporter that moves arginine across the vacuolar membrane. Active during nitrogen starvation when it exports stored vacuolar arginine to the cytosol, for use as a nitrogen source. Has been shown to function as an arginine/histidine antiporter when substrate is present on both sides of the membrane, but may also function as a uniporter. The sequence is that of Vacuolar arginine/histidine antiporter YPQ2 (YPQ2) from Saccharomyces cerevisiae (strain ATCC 204508 / S288c) (Baker's yeast).